A 446-amino-acid polypeptide reads, in one-letter code: Glutamyl-tRNA reductase (446 aa).

Residues 49-52 (TCNR), Ser107, 112-114 (EPQ), and Gln118 each bind substrate. Residue Cys50 is the Nucleophile of the active site. 187–192 (GAGETI) contributes to the NADP(+) binding site. The tract at residues 417–446 (NANEDTRESVDKEQTGTTQGAARGDQRSTG) is disordered. The span at 420–430 (EDTRESVDKEQ) shows a compositional bias: basic and acidic residues.

The protein belongs to the glutamyl-tRNA reductase family. Homodimer.

The enzyme catalyses (S)-4-amino-5-oxopentanoate + tRNA(Glu) + NADP(+) = L-glutamyl-tRNA(Glu) + NADPH + H(+). The protein operates within porphyrin-containing compound metabolism; protoporphyrin-IX biosynthesis; 5-aminolevulinate from L-glutamyl-tRNA(Glu): step 1/2. Functionally, catalyzes the NADPH-dependent reduction of glutamyl-tRNA(Glu) to glutamate 1-semialdehyde (GSA). In Alkalilimnicola ehrlichii (strain ATCC BAA-1101 / DSM 17681 / MLHE-1), this protein is Glutamyl-tRNA reductase.